A 1208-amino-acid chain; its full sequence is Lysine-specific demethylase JMJ17 (1208 aa).

A PHD-type 1; degenerate zinc finger spans residues 1–36; sequence MLLCDSCNKGWHIYCLSPPLKHIPLGNWYCLECLNT. Residues cysteine 4, cysteine 7, cysteine 30, and cysteine 33 each contribute to the Zn(2+) site. Positions 126–292 constitute a JmjC domain; the sequence is EYCGSPWNLN…YGGSGAELYR (167 aa). 3 residues coordinate Fe cation: histidine 172, glutamate 174, and histidine 260. Residues cysteine 369, cysteine 372, cysteine 383, cysteine 385, cysteine 392, histidine 395, cysteine 400, and cysteine 402 each contribute to the Zn(2+) site. A C5HC2 zinc finger spans residues 369–421; that stretch reads CIICQQFLHLSAIVCNCRPSVFACLEHWKHLCECEPTKLRLEYRYTLAELDMM. Positions 613–620 match the Nuclear localization signal motif; sequence SKKISSAK. Residues 1099–1145 form a PHD-type 2 zinc finger; that stretch reads MLHCICLKPYNSRSMVSCSQCGEWYHTYCLKLHWRPKAYVCSACCPL. Zn(2+)-binding residues include cysteine 1102, cysteine 1104, cysteine 1116, cysteine 1119, histidine 1124, cysteine 1127, cysteine 1139, and cysteine 1142.

Belongs to the JARID1 histone demethylase family. Fe(2+) is required as a cofactor. As to expression, expressed in inflorescences, roots, seedlings and siliques, and, at low levels, in leaves and stems.

Its subcellular location is the nucleus. It carries out the reaction N(6),N(6),N(6)-trimethyl-L-lysyl(4)-[histone H3] + 2-oxoglutarate + O2 = N(6),N(6)-dimethyl-L-lysyl(4)-[histone H3] + formaldehyde + succinate + CO2. The enzyme catalyses N(6),N(6)-dimethyl-L-lysyl(4)-[histone H3] + 2-oxoglutarate + O2 = N(6)-methyl-L-lysyl(4)-[histone H3] + formaldehyde + succinate + CO2. It catalyses the reaction N(6)-methyl-L-lysyl(4)-[histone H3] + 2-oxoglutarate + O2 = L-lysyl(4)-[histone H3] + formaldehyde + succinate + CO2. The catalysed reaction is N(6),N(6),N(6)-trimethyl-L-lysyl(4)-[histone H3] + 3 2-oxoglutarate + 3 O2 = L-lysyl(4)-[histone H3] + 3 formaldehyde + 3 succinate + 3 CO2. Functionally, functions as a histone H3 'Lys-4' (H3K4me) demethylase involved in the regulation of gene expression. Active on H3K4me1, H3K4me2 and H3K4me3. Repressor of the abscisic acid (ABA) signaling pathway, especially during stomatal closure regulation. Negative regulator of responses to dehydration stress by binding directly to the chromatin of SRK2E/OST1 and demethylating H3K4me3 to regulates its expression. Together with JMJ14 and JMJ16, required for plant growth and development. This is Lysine-specific demethylase JMJ17 from Arabidopsis thaliana (Mouse-ear cress).